We begin with the raw amino-acid sequence, 209 residues long: Pyroglutamyl-peptidase 1 (209 aa).

Active-site residues include glutamate 85, cysteine 149, and histidine 168.

The protein belongs to the peptidase C15 family. In terms of assembly, monomer.

The protein resides in the cytoplasm. It carries out the reaction Release of an N-terminal pyroglutamyl group from a polypeptide, the second amino acid generally not being Pro.. Inhibited by transition metal ions including Ni(2+), Zn(2+), and Cu(2+) and by sulfhydryl-blocking agents. Functionally, removes 5-oxoproline from various penultimate amino acid residues except L-proline. The sequence is that of Pyroglutamyl-peptidase 1 (PGPEP1) from Homo sapiens (Human).